The following is a 230-amino-acid chain: MVKLVFARHGESEWNKANLFTGWADVDLSEKGTQQAIDAGKLIKEAGIEFDLAFTSVLKRAIKTTNLALEYSDQLWVPVEKSWRLNERHYGGLTGKNKAEAAEQFGDEQVHIWRRSYDVLPPDMAKDDEHSAHTDRRYAHLDSSVIPDAENLKVTLERALPFWEDKIAPALVDGKNVFIGAHGNSIRALVKHIKRLNDDEIMDVEIPNFPPLVFEFDEKLNVTAEYYLGK.

Substrate contacts are provided by residues 8–15, 21–22, Arg-60, 87–90, Lys-98, 114–115, and 183–184; these read RHGESEWN, TG, ERHY, RR, and GN. His-9 acts as the Tele-phosphohistidine intermediate in catalysis. Glu-87 (proton donor/acceptor) is an active-site residue.

The protein belongs to the phosphoglycerate mutase family. BPG-dependent PGAM subfamily.

The enzyme catalyses (2R)-2-phosphoglycerate = (2R)-3-phosphoglycerate. It functions in the pathway carbohydrate degradation; glycolysis; pyruvate from D-glyceraldehyde 3-phosphate: step 3/5. Catalyzes the interconversion of 2-phosphoglycerate and 3-phosphoglycerate. This is 2,3-bisphosphoglycerate-dependent phosphoglycerate mutase from Streptococcus uberis (strain ATCC BAA-854 / 0140J).